Here is an 86-residue protein sequence, read N- to C-terminus: Neurotoxin 3FTx-8a (86 aa).

The first 21 residues, 1-21 (MKTLLLTLVVVTIVCLDLGYT), serve as a signal peptide directing secretion. 5 disulfides stabilise this stretch: Cys24–Cys45, Cys27–Cys32, Cys38–Cys63, Cys67–Cys78, and Cys79–Cys84.

As to expression, expressed by the venom gland.

The protein resides in the secreted. Functionally, binds with low affinity to muscular (alpha-1-beta-1-delta-epsilon/CHRNA1-CHRNB1-CHRND-CHRNE) and very low affinity to neuronal (alpha-7/CHRNA7) nicotinic acetylcholine receptor (nAChR). This is Neurotoxin 3FTx-8a from Bungarus fasciatus (Banded krait).